We begin with the raw amino-acid sequence, 356 residues long: UDP-N-acetylglucosamine--N-acetylmuramyl-(pentapeptide) pyrophosphoryl-undecaprenol N-acetylglucosamine transferase (356 aa).

UDP-N-acetyl-alpha-D-glucosamine is bound by residues Arg166, Ser196, and Gln290.

This sequence belongs to the glycosyltransferase 28 family. MurG subfamily.

The protein localises to the cell membrane. It carries out the reaction Mur2Ac(oyl-L-Ala-gamma-D-Glu-L-Lys-D-Ala-D-Ala)-di-trans,octa-cis-undecaprenyl diphosphate + UDP-N-acetyl-alpha-D-glucosamine = beta-D-GlcNAc-(1-&gt;4)-Mur2Ac(oyl-L-Ala-gamma-D-Glu-L-Lys-D-Ala-D-Ala)-di-trans,octa-cis-undecaprenyl diphosphate + UDP + H(+). It functions in the pathway cell wall biogenesis; peptidoglycan biosynthesis. Functionally, cell wall formation. Catalyzes the transfer of a GlcNAc subunit on undecaprenyl-pyrophosphoryl-MurNAc-pentapeptide (lipid intermediate I) to form undecaprenyl-pyrophosphoryl-MurNAc-(pentapeptide)GlcNAc (lipid intermediate II). This is UDP-N-acetylglucosamine--N-acetylmuramyl-(pentapeptide) pyrophosphoryl-undecaprenol N-acetylglucosamine transferase from Staphylococcus aureus (strain USA300).